Here is a 133-residue protein sequence, read N- to C-terminus: Small ribosomal subunit protein uS8c (133 aa).

Belongs to the universal ribosomal protein uS8 family. As to quaternary structure, part of the 30S ribosomal subunit.

Its subcellular location is the plastid. It localises to the chloroplast. Functionally, one of the primary rRNA binding proteins, it binds directly to 16S rRNA central domain where it helps coordinate assembly of the platform of the 30S subunit. The polypeptide is Small ribosomal subunit protein uS8c (rps8) (Pyropia yezoensis (Susabi-nori)).